The chain runs to 592 residues: Pyruvate decarboxylase 3 (592 aa).

The substrate site is built by Asp-54 and His-141. Residues 419-501 are thiamine pyrophosphate binding; that stretch reads DSWFNCQKLK…FLINNGGYTI (83 aa). Mg(2+)-binding residues include Asp-469, Asn-496, and Gly-498. Glu-502 lines the substrate pocket.

It belongs to the TPP enzyme family. As to quaternary structure, homotetramer. A metal cation serves as cofactor. It depends on thiamine diphosphate as a cofactor. As to expression, expressed at low levels in roots and shoots.

The catalysed reaction is a 2-oxocarboxylate + H(+) = an aldehyde + CO2. In Arabidopsis thaliana (Mouse-ear cress), this protein is Pyruvate decarboxylase 3 (PDC3).